The following is a 377-amino-acid chain: Methionine import ATP-binding protein MetN 2 (377 aa).

Positions Ile25–Leu262 constitute an ABC transporter domain. An ATP-binding site is contributed by Gly59–Ser66.

This sequence belongs to the ABC transporter superfamily. Methionine importer (TC 3.A.1.24) family. In terms of assembly, the complex is composed of two ATP-binding proteins (MetN), two transmembrane proteins (MetI) and a solute-binding protein (MetQ).

Its subcellular location is the cell inner membrane. It catalyses the reaction L-methionine(out) + ATP + H2O = L-methionine(in) + ADP + phosphate + H(+). The catalysed reaction is D-methionine(out) + ATP + H2O = D-methionine(in) + ADP + phosphate + H(+). Its function is as follows. Part of the ABC transporter complex MetNIQ involved in methionine import. Responsible for energy coupling to the transport system. The protein is Methionine import ATP-binding protein MetN 2 of Rhodopseudomonas palustris (strain ATCC BAA-98 / CGA009).